The following is a 516-amino-acid chain: Glutamyl-tRNA(Gln) amidotransferase subunit B, mitochondrial (516 aa).

This sequence belongs to the GatB/GatE family. GatB subfamily. Subunit of the heterotrimeric GatCAB amidotransferase (AdT) complex, composed of A, B and C subunits.

The protein localises to the mitochondrion. The catalysed reaction is L-glutamyl-tRNA(Gln) + L-glutamine + ATP + H2O = L-glutaminyl-tRNA(Gln) + L-glutamate + ADP + phosphate + H(+). Functionally, allows the formation of correctly charged Gln-tRNA(Gln) through the transamidation of misacylated Glu-tRNA(Gln) in the mitochondria. The reaction takes place in the presence of glutamine and ATP through an activated gamma-phospho-Glu-tRNA(Gln). The protein is Glutamyl-tRNA(Gln) amidotransferase subunit B, mitochondrial of Drosophila melanogaster (Fruit fly).